A 276-amino-acid polypeptide reads, in one-letter code: NH(3)-dependent NAD(+) synthetase (276 aa).

An ATP-binding site is contributed by 43–50 (GISGGVDS). Aspartate 49 is a binding site for Mg(2+). Arginine 146 is a deamido-NAD(+) binding site. Threonine 166 serves as a coordination point for ATP. Glutamate 171 contacts Mg(2+). 2 residues coordinate deamido-NAD(+): lysine 179 and aspartate 186. ATP-binding residues include lysine 195 and threonine 217. 266 to 267 (HK) lines the deamido-NAD(+) pocket.

This sequence belongs to the NAD synthetase family. As to quaternary structure, homodimer.

It catalyses the reaction deamido-NAD(+) + NH4(+) + ATP = AMP + diphosphate + NAD(+) + H(+). It functions in the pathway cofactor biosynthesis; NAD(+) biosynthesis; NAD(+) from deamido-NAD(+) (ammonia route): step 1/1. Its function is as follows. Catalyzes the ATP-dependent amidation of deamido-NAD to form NAD. Uses ammonia as a nitrogen source. In Vibrio parahaemolyticus serotype O3:K6 (strain RIMD 2210633), this protein is NH(3)-dependent NAD(+) synthetase.